Consider the following 290-residue polypeptide: Fructose-1,6-bisphosphatase class 1 (290 aa).

Residues glutamate 78, aspartate 96, leucine 98, and aspartate 99 each contribute to the Mg(2+) site. Substrate is bound by residues 99 to 102 (DGSS), tyrosine 201, and lysine 226. Glutamate 232 contacts Mg(2+).

The protein belongs to the FBPase class 1 family. As to quaternary structure, homotetramer. Mg(2+) is required as a cofactor.

It localises to the cytoplasm. It catalyses the reaction beta-D-fructose 1,6-bisphosphate + H2O = beta-D-fructose 6-phosphate + phosphate. It participates in carbohydrate biosynthesis; gluconeogenesis. This chain is Fructose-1,6-bisphosphatase class 1, found in Helicobacter pylori (strain G27).